A 404-amino-acid polypeptide reads, in one-letter code: 1-deoxy-D-xylulose 5-phosphate reductoisomerase (404 aa).

Residues Thr10, Gly11, Ser12, Ile13, Gly36, Arg37, Asn38, and Asn124 each coordinate NADPH. Residue Lys125 participates in 1-deoxy-D-xylulose 5-phosphate binding. Glu126 serves as a coordination point for NADPH. Asp150 provides a ligand contact to Mn(2+). Residues Ser151, Glu152, Ser186, and His209 each contribute to the 1-deoxy-D-xylulose 5-phosphate site. Residue Glu152 participates in Mn(2+) binding. Gly215 is a binding site for NADPH. Positions 222, 227, 228, and 231 each coordinate 1-deoxy-D-xylulose 5-phosphate. Glu231 contacts Mn(2+).

This sequence belongs to the DXR family. Homodimer. It depends on Mg(2+) as a cofactor. Mn(2+) is required as a cofactor.

It carries out the reaction 2-C-methyl-D-erythritol 4-phosphate + NADP(+) = 1-deoxy-D-xylulose 5-phosphate + NADPH + H(+). It functions in the pathway isoprenoid biosynthesis; isopentenyl diphosphate biosynthesis via DXP pathway; isopentenyl diphosphate from 1-deoxy-D-xylulose 5-phosphate: step 1/6. Catalyzes the NADPH-dependent rearrangement and reduction of 1-deoxy-D-xylulose-5-phosphate (DXP) to 2-C-methyl-D-erythritol 4-phosphate (MEP). The protein is 1-deoxy-D-xylulose 5-phosphate reductoisomerase of Erwinia tasmaniensis (strain DSM 17950 / CFBP 7177 / CIP 109463 / NCPPB 4357 / Et1/99).